Reading from the N-terminus, the 601-residue chain is MAGSDLLLAGVLFLFAAVIAVPLASRLGIGAVLGYLLAGIAIGPWGLGFISDVDEILHFSELGVVFLMFIIGLELNPAKLWRLRSSIFGVGAAQVMLSAAILGGLLMTTGFSWQAAVVGGIGLAMSSTAMALQLMREKGMSRSEAGQLGFSVLLFQDLAVIPALALVPLLAGSADEHVNWLTVGMKVLAFAGMLIGGRYLLRPVFRFIASSGVREVFTAATLLLVLGSALFMEALGLSMALGTFIAGVLLAESEYRHELEIAIDPFKGLLLGLFFISVGMALNLGVLYTHLLWVAVSVAVLVAVKMLVLYLLARLYGLRSSERMQFAGVLSQGGEFAFVLFSLPASQRLFLHDQMALLLVAVTLSMMTTPLLMKGIDKLLSRRLNPADDTGEAPWVEDDKPQVIIVGFGRFGQVIGRLLMANKMRITVLERDISAVNLMRNYGYKVYFGDATQLELLRSAGAEEAQSIVITCNEPEDTMRLVEMCQQHFPHLHILARARGRVEAHELLQAGVTQFSRETFSSALELGRKALITLGMHPHQAQRAQLHFRRLDMRMLRELMPVHTDTVQISRVREARRELEEIFQREMQKESRQLDGWDEFE.

Helical transmembrane passes span 4 to 24 (SDLL…VPLA), 29 to 49 (IGAV…GLGF), 55 to 75 (EILH…GLEL), 87 to 107 (IFGV…GLLM), 115 to 135 (AAVV…LQLM), 152 to 172 (VLLF…LLAG), 177 to 197 (HVNW…LIGG), 207 to 227 (FIAS…LVLG), 230 to 250 (LFME…GVLL), 268 to 288 (GLLL…GVLY), 291 to 311 (LLWV…VLYL), 326 to 346 (FAGV…LPAS), and 356 to 376 (ALLL…MKGI). Residues 400–519 (KPQVIIVGFG…AGVTQFSRET (120 aa)) form the RCK N-terminal domain.

The protein belongs to the monovalent cation:proton antiporter 2 (CPA2) transporter (TC 2.A.37) family. KefB subfamily. In terms of assembly, interacts with the regulatory subunit KefG.

The protein resides in the cell inner membrane. Functionally, pore-forming subunit of a potassium efflux system that confers protection against electrophiles. Catalyzes K(+)/H(+) antiport. The sequence is that of Glutathione-regulated potassium-efflux system protein KefB from Klebsiella pneumoniae subsp. pneumoniae (strain ATCC 700721 / MGH 78578).